A 152-amino-acid chain; its full sequence is Large-conductance mechanosensitive channel (152 aa).

A run of 2 helical transmembrane segments spans residues 14–34 and 81–101; these read VIDLAIGVIIGGAFGKIVTSL and GLFLNNLINFLIIAFSIFIAI.

It belongs to the MscL family. In terms of assembly, homopentamer.

Its subcellular location is the cell membrane. In terms of biological role, channel that opens in response to stretch forces in the membrane lipid bilayer. May participate in the regulation of osmotic pressure changes within the cell. This chain is Large-conductance mechanosensitive channel, found in Clostridium perfringens (strain 13 / Type A).